A 67-amino-acid chain; its full sequence is Conotoxin TsMMSK-011 (67 aa).

The first 20 residues, methionine 1–alanine 20, serve as a signal peptide directing secretion. Residues valine 21–valine 50 constitute a propeptide that is removed on maturation. Intrachain disulfides connect cysteine 53-cysteine 65, cysteine 54-cysteine 61, and cysteine 58-cysteine 64. The residue at position 63 (proline 63) is a 4-hydroxyproline.

Belongs to the conotoxin M superfamily. Expressed by the venom duct.

The protein localises to the secreted. The protein is Conotoxin TsMMSK-011 of Conus tessulatus (Tessellate cone).